Here is an 89-residue protein sequence, read N- to C-terminus: Small ribosomal subunit protein uS17 (89 aa).

The protein belongs to the universal ribosomal protein uS17 family. In terms of assembly, part of the 30S ribosomal subunit.

Its function is as follows. One of the primary rRNA binding proteins, it binds specifically to the 5'-end of 16S ribosomal RNA. The protein is Small ribosomal subunit protein uS17 of Phytoplasma mali (strain AT).